A 793-amino-acid chain; its full sequence is Wall-associated receptor kinase-like 18 (793 aa).

The N-terminal stretch at 1-28 (MSNESTNCSFFLNLFMLLLLLIFYSADA) is a signal peptide. Over 29–378 (CQRECGGISI…YRCVRDKTKA (350 aa)) the chain is Extracellular. 6 N-linked (GlcNAc...) asparagine glycosylation sites follow: Asn60, Asn130, Asn170, Asn238, Asn285, and Asn304. Residues 312 to 371 (CTCGRITISETSYANCGCTYGYTGNPYVLNGCKDIDECKVKFEYCGKTETCVNFEGGYRC) are atypical EGF-like. 3 cysteine pairs are disulfide-bonded: Cys314–Cys327, Cys349–Cys362, and Cys356–Cys371. Residues 379-399 (IMIGAGTGFGVLVLVGGLWWL) form a helical membrane-spanning segment. Over 400-793 (RKFLIKRRIT…VEPLFPRLTW (394 aa)) the chain is Cytoplasmic. Positions 453–728 (FSENRVLGHG…REVFTELERI (276 aa)) constitute a Protein kinase domain. ATP contacts are provided by residues 459-467 (LGHGGQGTV) and Lys481. Tyr526 is subject to Phosphotyrosine. The active-site Proton acceptor is Asp579. Thr613 and Thr618 each carry phosphothreonine. Tyr626 is subject to Phosphotyrosine. Residues 733–757 (EDSQVHNRIDEEEEEEEEEEEVVTT) are disordered. The span at 742-754 (DEEEEEEEEEEEV) shows a compositional bias: acidic residues.

Belongs to the protein kinase superfamily. Ser/Thr protein kinase family.

It localises to the membrane. It carries out the reaction L-seryl-[protein] + ATP = O-phospho-L-seryl-[protein] + ADP + H(+). The enzyme catalyses L-threonyl-[protein] + ATP = O-phospho-L-threonyl-[protein] + ADP + H(+). Functionally, serine/threonine-protein kinase that may function as a signaling receptor of extracellular matrix component. This Arabidopsis thaliana (Mouse-ear cress) protein is Wall-associated receptor kinase-like 18 (WAKL18).